A 436-amino-acid polypeptide reads, in one-letter code: Adenosylhomocysteinase (436 aa).

Substrate is bound by residues Thr-62, Asp-136, and Glu-161. Residue 162–164 (TTT) participates in NAD(+) binding. The substrate site is built by Lys-191 and Asp-195. NAD(+)-binding positions include Asn-196, 225 to 230 (GFGDVG), Glu-248, Asn-283, 304 to 306 (IGH), and Asn-352.

This sequence belongs to the adenosylhomocysteinase family. NAD(+) is required as a cofactor.

It is found in the cytoplasm. It carries out the reaction S-adenosyl-L-homocysteine + H2O = L-homocysteine + adenosine. It participates in amino-acid biosynthesis; L-homocysteine biosynthesis; L-homocysteine from S-adenosyl-L-homocysteine: step 1/1. In terms of biological role, may play a key role in the regulation of the intracellular concentration of adenosylhomocysteine. The chain is Adenosylhomocysteinase from Leptospira interrogans serogroup Icterohaemorrhagiae serovar copenhageni (strain Fiocruz L1-130).